The sequence spans 325 residues: Acetyl-coenzyme A carboxylase carboxyl transferase subunit beta (325 aa).

Residues 24–293 form the CoA carboxyltransferase N-terminal domain; the sequence is LWIKCPDSGH…AEIEVVTPEP (270 aa).

It belongs to the AccD/PCCB family. Acetyl-CoA carboxylase is a heterohexamer composed of biotin carboxyl carrier protein (AccB), biotin carboxylase (AccC) and two subunits each of ACCase subunit alpha (AccA) and ACCase subunit beta (AccD).

The protein localises to the cytoplasm. The catalysed reaction is N(6)-carboxybiotinyl-L-lysyl-[protein] + acetyl-CoA = N(6)-biotinyl-L-lysyl-[protein] + malonyl-CoA. It participates in lipid metabolism; malonyl-CoA biosynthesis; malonyl-CoA from acetyl-CoA: step 1/1. In terms of biological role, component of the acetyl coenzyme A carboxylase (ACC) complex. Biotin carboxylase (BC) catalyzes the carboxylation of biotin on its carrier protein (BCCP) and then the CO(2) group is transferred by the transcarboxylase to acetyl-CoA to form malonyl-CoA. The sequence is that of Acetyl-coenzyme A carboxylase carboxyl transferase subunit beta from Rhodopseudomonas palustris (strain BisA53).